We begin with the raw amino-acid sequence, 85 residues long: Large ribosomal subunit protein bL27 (85 aa).

This sequence belongs to the bacterial ribosomal protein bL27 family.

The chain is Large ribosomal subunit protein bL27 from Persephonella marina (strain DSM 14350 / EX-H1).